We begin with the raw amino-acid sequence, 85 residues long: ATP synthase subunit c (85 aa).

Helical transmembrane passes span 10-30 (IAVA…FGLL) and 53-73 (FIVA…ALFF).

The protein belongs to the ATPase C chain family. As to quaternary structure, F-type ATPases have 2 components, F(1) - the catalytic core - and F(0) - the membrane proton channel. F(1) has five subunits: alpha(3), beta(3), gamma(1), delta(1), epsilon(1). F(0) has three main subunits: a(1), b(2) and c(10-14). The alpha and beta chains form an alternating ring which encloses part of the gamma chain. F(1) is attached to F(0) by a central stalk formed by the gamma and epsilon chains, while a peripheral stalk is formed by the delta and b chains.

It localises to the cell inner membrane. Its function is as follows. F(1)F(0) ATP synthase produces ATP from ADP in the presence of a proton or sodium gradient. F-type ATPases consist of two structural domains, F(1) containing the extramembraneous catalytic core and F(0) containing the membrane proton channel, linked together by a central stalk and a peripheral stalk. During catalysis, ATP synthesis in the catalytic domain of F(1) is coupled via a rotary mechanism of the central stalk subunits to proton translocation. Key component of the F(0) channel; it plays a direct role in translocation across the membrane. A homomeric c-ring of between 10-14 subunits forms the central stalk rotor element with the F(1) delta and epsilon subunits. The chain is ATP synthase subunit c from Pseudomonas syringae pv. syringae (strain B728a).